Reading from the N-terminus, the 1101-residue chain is Selenocysteine insertion sequence-binding protein 2-like (1101 aa).

5 disordered regions span residues 154–206 (LGQV…AGPD), 240–295 (LWKS…PDSG), 320–387 (QKKP…SESL), 884–1010 (TSDG…ISVE), and 1030–1101 (TLQL…TQTT). Residues 255–265 (AESSSEQGASE) are compositionally biased toward low complexity. Ser-276 bears the Phosphoserine mark. The segment covering 327-346 (KNQTFSRGGRQTEQRNNSQV) has biased composition (polar residues). Composition is skewed to basic and acidic residues over residues 356-371 (SSERRQNLQKRPDNKH) and 892-908 (ENEKEVSCKHSTSEKPS). Low complexity predominate over residues 925–939 (ATGSTTSATSAGKST). Positions 940–950 (ASDKEEVKPDD) are enriched in basic and acidic residues. The span at 954 to 964 (ASQQSTETGSL) shows a compositional bias: polar residues. Over residues 988–1002 (LEEEEDEDEEEEEDY) the composition is skewed to acidic residues. Residues 1030–1039 (TLQLGKTLNG) are compositionally biased toward polar residues. Residues 1040-1057 (SEEDNVEQSGEEEAEAPE) show a composition bias toward acidic residues. Residues 1070–1087 (ADQQASPGQQKSSNCSSL) show a composition bias toward polar residues.

Binds SECIS (Sec insertion sequence) elements present on selenocysteine (Sec) protein mRNAs, but does not promote Sec incorporation into selenoproteins in vitro. The polypeptide is Selenocysteine insertion sequence-binding protein 2-like (SECISBP2L) (Homo sapiens (Human)).